The sequence spans 93 residues: Small ribosomal subunit protein uS19 (93 aa).

This sequence belongs to the universal ribosomal protein uS19 family.

Protein S19 forms a complex with S13 that binds strongly to the 16S ribosomal RNA. The protein is Small ribosomal subunit protein uS19 of Desulfitobacterium hafniense (strain DSM 10664 / DCB-2).